The primary structure comprises 807 residues: Anaphase-promoting complex subunit 4 (807 aa).

Position 469 is a phosphotyrosine (Y469). Positions 755–788 (DESSDDEEEAGGKPVKIKEEVLSESETEAHQDAA) are disordered. Phosphoserine is present on residues S757 and S758. The span at 770–785 (KIKEEVLSESETEAHQ) shows a compositional bias: basic and acidic residues. Residue K772 forms a Glycyl lysine isopeptide (Lys-Gly) (interchain with G-Cter in SUMO2) linkage. 2 positions are modified to phosphoserine: S777 and S779. A Glycyl lysine isopeptide (Lys-Gly) (interchain with G-Cter in SUMO2) cross-link involves residue K797.

The protein belongs to the APC4 family. As to quaternary structure, the mammalian APC/C is composed at least of 14 distinct subunits ANAPC1, ANAPC2, CDC27/APC3, ANAPC4, ANAPC5, CDC16/APC6, ANAPC7, CDC23/APC8, ANAPC10, ANAPC11, CDC26/APC12, ANAPC13, ANAPC15 and ANAPC16 that assemble into a complex of at least 19 chains with a combined molecular mass of around 1.2 MDa; APC/C interacts with FZR1 and FBXO5. In the context of the APC/C complex, directly interacts with UBE2S. Interacts with FBXO43.

The protein resides in the nucleus. It participates in protein modification; protein ubiquitination. Its function is as follows. Component of the anaphase promoting complex/cyclosome (APC/C), a cell cycle-regulated E3 ubiquitin ligase that controls progression through mitosis and the G1 phase of the cell cycle. The APC/C complex acts by mediating ubiquitination and subsequent degradation of target proteins: it mainly mediates the formation of 'Lys-11'-linked polyubiquitin chains and, to a lower extent, the formation of 'Lys-48'- and 'Lys-63'-linked polyubiquitin chains. The APC/C complex catalyzes assembly of branched 'Lys-11'-/'Lys-48'-linked branched ubiquitin chains on target proteins. This is Anaphase-promoting complex subunit 4 (Anapc4) from Mus musculus (Mouse).